A 160-amino-acid chain; its full sequence is Putative antiporter subunit mnhE2 (160 aa).

3 helical membrane-spanning segments follow: residues 22–42 (HFKF…IYIL), 55–75 (IWVA…SSIS), and 100–120 (SDWA…STVI).

It belongs to the CPA3 antiporters (TC 2.A.63) subunit E family. May form a heterooligomeric complex that consists of seven subunits: mnhA2, mnhB2, mnhC2, mnhD2, mnhE2, mnhF2 and mnhG2.

It localises to the cell membrane. The chain is Putative antiporter subunit mnhE2 (mnhE2) from Staphylococcus aureus (strain Mu3 / ATCC 700698).